The following is a 393-amino-acid chain: CCCH-type zinc finger protein oma-2 (393 aa).

The interval 1–26 (MDMLKENVIQNNEARTESSVEPSHPD) is disordered. The span at 14 to 26 (ARTESSVEPSHPD) shows a compositional bias: basic and acidic residues. C3H1-type zinc fingers lie at residues 105-133 (SYKT…HGEE) and 147-175 (KYRT…HPDN). Disordered regions lie at residues 227–251 (TPDE…RYEL) and 311–340 (KQST…LTAA). The span at 313 to 340 (STPGGVSGYSSSGSTPSQDSDSSPLTAA) shows a compositional bias: low complexity. A Phosphothreonine; by GSK3 modification is found at T327.

Exclusively expressed in the hermaphrodite gonad. Expression only in cellulized oocytes. Widely distributed throughout gonadal oocytes from the mitotic stage to the developing diakinesis stage.

The protein resides in the cytoplasm. It is found in the cytoplasmic granule. It localises to the cytoskeleton. Its subcellular location is the microtubule organizing center. The protein localises to the centrosome. In terms of biological role, zinc-finger RNA-binding protein that binds to 5'-UA[AU]-3' motifs in the 3'-UTR of maternal mRNAs to suppress translation in oocytes and embryos. Acts redundantly with oma-1 to control the temporal expression and distribution of maternal proteins and thereby promote meiotic progression, oocyte maturation, fertilization and embryonic development. Also, together with oma-1, is involved in P-granule distribution during embryonic development. The protein is CCCH-type zinc finger protein oma-2 of Caenorhabditis elegans.